We begin with the raw amino-acid sequence, 145 residues long: 3-hydroxyacyl-[acyl-carrier-protein] dehydratase FabZ (145 aa).

Residue H47 is part of the active site.

It belongs to the thioester dehydratase family. FabZ subfamily.

Its subcellular location is the cytoplasm. The catalysed reaction is a (3R)-hydroxyacyl-[ACP] = a (2E)-enoyl-[ACP] + H2O. In terms of biological role, involved in unsaturated fatty acids biosynthesis. Catalyzes the dehydration of short chain beta-hydroxyacyl-ACPs and long chain saturated and unsaturated beta-hydroxyacyl-ACPs. This Polaromonas sp. (strain JS666 / ATCC BAA-500) protein is 3-hydroxyacyl-[acyl-carrier-protein] dehydratase FabZ.